The sequence spans 361 residues: Holliday junction branch migration complex subunit RuvB (361 aa).

The segment at 1-183 is large ATPase domain (RuvB-L); it reads MAEPSLVAAG…FGFTGHLEFY (183 aa). ATP contacts are provided by residues L22, R23, G64, K67, T68, T69, 130-132, R173, Y183, and R220; that span reads EDF. T68 serves as a coordination point for Mg(2+). Residues 184-254 form a small ATPAse domain (RuvB-S) region; that stretch reads SVPELELVLR…SASAALDMYE (71 aa). Residues 257–361 form a head domain (RuvB-H) region; the sequence is KKGLDRLDRS…VTGEWAPESQ (105 aa). R312 and R317 together coordinate DNA.

It belongs to the RuvB family. In terms of assembly, homohexamer. Forms an RuvA(8)-RuvB(12)-Holliday junction (HJ) complex. HJ DNA is sandwiched between 2 RuvA tetramers; dsDNA enters through RuvA and exits via RuvB. An RuvB hexamer assembles on each DNA strand where it exits the tetramer. Each RuvB hexamer is contacted by two RuvA subunits (via domain III) on 2 adjacent RuvB subunits; this complex drives branch migration. In the full resolvosome a probable DNA-RuvA(4)-RuvB(12)-RuvC(2) complex forms which resolves the HJ.

Its subcellular location is the cytoplasm. It carries out the reaction ATP + H2O = ADP + phosphate + H(+). Functionally, the RuvA-RuvB-RuvC complex processes Holliday junction (HJ) DNA during genetic recombination and DNA repair, while the RuvA-RuvB complex plays an important role in the rescue of blocked DNA replication forks via replication fork reversal (RFR). RuvA specifically binds to HJ cruciform DNA, conferring on it an open structure. The RuvB hexamer acts as an ATP-dependent pump, pulling dsDNA into and through the RuvAB complex. RuvB forms 2 homohexamers on either side of HJ DNA bound by 1 or 2 RuvA tetramers; 4 subunits per hexamer contact DNA at a time. Coordinated motions by a converter formed by DNA-disengaged RuvB subunits stimulates ATP hydrolysis and nucleotide exchange. Immobilization of the converter enables RuvB to convert the ATP-contained energy into a lever motion, pulling 2 nucleotides of DNA out of the RuvA tetramer per ATP hydrolyzed, thus driving DNA branch migration. The RuvB motors rotate together with the DNA substrate, which together with the progressing nucleotide cycle form the mechanistic basis for DNA recombination by continuous HJ branch migration. Branch migration allows RuvC to scan DNA until it finds its consensus sequence, where it cleaves and resolves cruciform DNA. The protein is Holliday junction branch migration complex subunit RuvB of Pseudarthrobacter chlorophenolicus (strain ATCC 700700 / DSM 12829 / CIP 107037 / JCM 12360 / KCTC 9906 / NCIMB 13794 / A6) (Arthrobacter chlorophenolicus).